The primary structure comprises 87 residues: MNSLLMITACLFLIGTVWAKEGYLVNKSTGCKYGCLLLGKNEGCDKECKAKNQGGSYGYCYAFGCWCEGLPESTPTYPLPNKSCSKK.

A signal peptide spans 1 to 19 (MNSLLMITACLFLIGTVWA). In terms of domain architecture, LCN-type CS-alpha/beta spans 20-85 (KEGYLVNKST…TYPLPNKSCS (66 aa)). Cystine bridges form between Cys31/Cys84, Cys35/Cys60, Cys44/Cys65, and Cys48/Cys67.

This sequence belongs to the long (4 C-C) scorpion toxin superfamily. Sodium channel inhibitor family. Beta subfamily. Expressed by the venom gland.

The protein localises to the secreted. Functionally, beta toxins bind voltage-independently at site-4 of sodium channels (Nav) and shift the voltage of activation toward more negative potentials thereby affecting sodium channel activation and promoting spontaneous and repetitive firing. This toxin is lethal to crustaceans (freshwater crayfish (Cambarellus montezumae spp.)), it provokes a reversible paralysis to insects (crickets (Achaeta spp.)), but is not toxic to mice. At high concentrations, it does displace the (beta) mammal-specific toxin Cn2 from rat brain synaptosomes. The chain is Beta-toxin Cn5 from Centruroides noxius (Mexican scorpion).